A 209-amino-acid polypeptide reads, in one-letter code: Nascent polypeptide-associated complex subunit alpha-like protein 5 (209 aa).

The disordered stretch occupies residues 23 to 71 (EKEDDVVVEDVKDGEEEDDDEDDEDVEVEGEGGNENAKQSRSEKKSRKA). A compositionally biased stretch (acidic residues) spans 25 to 54 (EDDVVVEDVKDGEEEDDDEDDEDVEVEGEG). The NAC-A/B domain occupies 62-127 (SRSEKKSRKA…AKVDDLSSQL (66 aa)). One can recognise a UBA domain in the interval 170 to 207 (VEARDIDLVMTQAGVSKAKAVSALKANDGDIVSAIMEL).

Belongs to the NAC-alpha family.

Its function is as follows. May promote appropriate targeting of ribosome-nascent polypeptide complexes. The sequence is that of Nascent polypeptide-associated complex subunit alpha-like protein 5 from Arabidopsis thaliana (Mouse-ear cress).